The sequence spans 37 residues: Photosystem II reaction center protein Y (37 aa).

Residues 4 to 22 form a helical membrane-spanning segment; that stretch reads AIVVFAPIIAAVAWVVFNI.

The protein belongs to the PsbY family. PSII is composed of 1 copy each of membrane proteins PsbA, PsbB, PsbC, PsbD, PsbE, PsbF, PsbH, PsbI, PsbJ, PsbK, PsbL, PsbM, PsbT, PsbX, PsbY, Psb30/Ycf12, peripheral proteins PsbO, CyanoQ (PsbQ), PsbU, PsbV and a large number of cofactors. It forms dimeric complexes.

Its subcellular location is the cellular thylakoid membrane. Its function is as follows. Loosely associated component of the core of photosystem II (PSII), it is not always seen in crystals. PSII is a light-driven water plastoquinone oxidoreductase, using light energy to abstract electrons from H(2)O, generating a proton gradient subsequently used for ATP formation. The polypeptide is Photosystem II reaction center protein Y (Prochlorococcus marinus (strain MIT 9312)).